A 163-amino-acid chain; its full sequence is Ribonuclease P protein subunit p25-like protein (163 aa).

Disordered regions lie at residues 1-22 and 129-163; these read MEHYRKAGSVELPAPSPMPQLP and NECGYQPPGAPPGLGSMPSSSCGPRSRRRARDTRS. Residues 143 to 152 show a composition bias toward low complexity; that stretch reads GSMPSSSCGP. Positions 153–163 are enriched in basic residues; the sequence is RSRRRARDTRS.

The protein belongs to the histone-like Alba family.

It is found in the nucleus. Its function is as follows. May be a component of ribonuclease P or MRP. The protein is Ribonuclease P protein subunit p25-like protein (RPP25L) of Homo sapiens (Human).